Consider the following 496-residue polypeptide: Lysosomal Pro-X carboxypeptidase (496 aa).

The N-terminal stretch at 1–21 is a signal peptide; that stretch reads MGRRALLLLLLSFLAPWTTIA. The propeptide occupies 22 to 45; sequence LRPALRALGSLHLPTNPTSLPAVA. N-linked (GlcNAc...) asparagine glycosylation is found at asparagine 47 and asparagine 101. Serine 179 (charge relay system) is an active-site residue. Residues 194–334 form an SKS domain region; the sequence is HMVVGALAAS…QNIFQALNVY (141 aa). Intrachain disulfides connect cysteine 215–cysteine 372, cysteine 233–cysteine 310, cysteine 264–cysteine 343, and cysteine 364–cysteine 394. Residues asparagine 317, asparagine 336, and asparagine 345 are each glycosylated (N-linked (GlcNAc...) asparagine). A glycan (N-linked (GlcNAc...) asparagine) is linked at asparagine 415. Residues aspartate 430 and histidine 455 each act as charge relay system in the active site.

This sequence belongs to the peptidase S28 family. Homodimer.

The protein localises to the lysosome. It carries out the reaction Cleavage of a -Pro-|-Xaa bond to release a C-terminal amino acid.. Functionally, cleaves C-terminal amino acids linked to proline in peptides such as angiotensin II, III and des-Arg9-bradykinin. This cleavage occurs at acidic pH, but enzymatic activity is retained with some substrates at neutral pH. In Pongo abelii (Sumatran orangutan), this protein is Lysosomal Pro-X carboxypeptidase (PRCP).